Consider the following 289-residue polypeptide: ATP synthase gamma chain (289 aa).

This sequence belongs to the ATPase gamma chain family. In terms of assembly, F-type ATPases have 2 components, CF(1) - the catalytic core - and CF(0) - the membrane proton channel. CF(1) has five subunits: alpha(3), beta(3), gamma(1), delta(1), epsilon(1). CF(0) has three main subunits: a, b and c.

Its subcellular location is the cell inner membrane. Its function is as follows. Produces ATP from ADP in the presence of a proton gradient across the membrane. The gamma chain is believed to be important in regulating ATPase activity and the flow of protons through the CF(0) complex. In Haemophilus influenzae (strain 86-028NP), this protein is ATP synthase gamma chain.